Here is a 456-residue protein sequence, read N- to C-terminus: TGACG-sequence-specific DNA-binding protein TGA-2.1 (456 aa).

2 disordered regions span residues 1-41 (MASK…NTSR) and 115-170 (SASG…QKTL). 2 stretches are compositionally biased toward polar residues: residues 9-41 (GNRS…NTSR) and 125-141 (GESN…TSTD). A compositionally biased stretch (basic and acidic residues) spans 158-169 (DKSKEKVLDQKT). Positions 166–229 (DQKTLRRLAQ…NIADQSNGVG (64 aa)) constitute a bZIP domain. The stretch at 167 to 220 (QKTLRRLAQNREAARKSRLRKKAYVQQLENSRLKLSQLEQDLQRARQQGKYISN) forms a coiled coil. Residues 168–188 (KTLRRLAQNREAARKSRLRKK) are basic motif. A leucine-zipper region spans residues 194–208 (LENSRLKLSQLEQDL). Residues 233–450 (PLAFDAEYSR…RALSSLWLAR (218 aa)) form the DOG1 domain.

The protein belongs to the bZIP family. In terms of assembly, can form heterodimer with TGA2.2.

The protein resides in the nucleus. Transcriptional activator that binds specifically to the DNA sequence 5'-TGACG-3'. Recognizes ocs elements like the as-1 motif of the cauliflower mosaic virus 35S promoter. Binding to the as-1-like cis elements mediate auxin- and salicylic acid-inducible transcription. The chain is TGACG-sequence-specific DNA-binding protein TGA-2.1 (TGA21) from Nicotiana tabacum (Common tobacco).